The primary structure comprises 297 residues: uncharacterized protein (297 aa).

9 helical membrane-spanning segments follow: residues 1 to 21 (MSWIIFYTIIAALLILDLGII), 32 to 52 (GSILLSLFYFIISCLFGIYVY), 72 to 92 (AMALDNIFIISIIFQFFNIPS), 98 to 118 (VLFFGIIGVIIFKAIIIYGGI), 120 to 140 (LIHKFSWLLYILAVILIATGI), 194 to 214 (ILIETIDLVFAIDSIAAIFAI), 218 to 238 (VYIIYTSNIFAILGLRSLFFC), 253 to 273 (LALILIFIGFKIFIHHYIEIP), and 274 to 294 (AYISLTVTISSLLFGIIASIL).

It belongs to the TerC family.

Its subcellular location is the cell membrane. This is an uncharacterized protein from Rickettsia prowazekii (strain Madrid E).